The primary structure comprises 225 residues: Zinc finger protein 22 (225 aa).

The segment at 1–35 is disordered; it reads MRLGKPKGGISRSSSQGKVYENQRKTGRQRQRWGM. Residue K18 is modified to N6-acetyllysine. 5 consecutive C2H2-type zinc fingers follow at residues 55–77, 83–105, 111–133, 139–161, and 167–189; these read YKCV…QKIH, HKCA…RRVH, YRCD…QRIH, YQCD…QRTH, and YQCS…TKVH. Residues 183-225 are disordered; the sequence is RQHTKVHEEEKPRKTRGRSLRAKTHSLSSWKAGKGRRSAAGLR. The segment covering 195 to 206 has biased composition (basic residues); it reads RKTRGRSLRAKT.

It belongs to the krueppel C2H2-type zinc-finger protein family.

Its subcellular location is the nucleus. Binds DNA through the consensus sequence 5'-CAATG-3'. May be involved in transcriptional regulation and may play a role in tooth formation. This Bos taurus (Bovine) protein is Zinc finger protein 22 (ZNF22).